The primary structure comprises 1209 residues: Phospholipid-transporting ATPase ID (1209 aa).

A compositionally biased stretch (basic and acidic residues) spans 1–12 (MTVPKEMPEKWA). The segment at 1 to 36 (MTVPKEMPEKWARAQAPPSWSRKKPSWGTEEERRAR) is disordered. At 1–64 (MTVPKEMPEK…TSKYNILTFL (64 aa)) the chain is on the cytoplasmic side. The chain crosses the membrane as a helical span at residues 65–86 (PVNLFEQFQEVANTYFLFLLIL). Residues 87–92 (QLIPQI) are Exoplasmic loop-facing. Residues 93-112 (SSLSWFTTIVPLVLVLTITA) traverse the membrane as a helical segment. Topologically, residues 113–295 (VKDATDDYFR…TSIDRLMNTL (183 aa)) are cytoplasmic. A helical transmembrane segment spans residues 296-317 (VLWIFGFLVCMGVILAIGNAIW). Residues 318 to 346 (EHEVGMRFQVYLPWDEAVDSAFFSGFLSF) are Exoplasmic loop-facing. Residues 347-368 (WSYIIILNTVVPISLYVSVEVI) traverse the membrane as a helical segment. The Cytoplasmic segment spans residues 369-889 (RLGHSYFINW…GRWSYLRMCK (521 aa)). D411 (4-aspartylphosphate intermediate) is an active-site residue. Residues D411, K412, T413, E515, F556, K579, R613, T693, G694, D695, R807, and K813 each contribute to the ATP site. D411 contacts Mg(2+). Residue T413 participates in Mg(2+) binding. Residue D833 coordinates Mg(2+). N836 and D837 together coordinate ATP. D837 contacts Mg(2+). A helical transmembrane segment spans residues 890–910 (FLCYFFYKNFAFTMVHFWFGF). Over 911–922 (FCGFSAQTVYDQ) the chain is Exoplasmic loop. Residues 923 to 942 (YFITLYNIVYTSLPVLAMGV) form a helical membrane-spanning segment. The Cytoplasmic segment spans residues 943–972 (FDQDVPEQRSMEYPKLYEPGQLNLLFNKRE). The helical transmembrane segment at 973–994 (FFICIAQGIYTSVLMFFIPYGV) threads the bilayer. Residues 995-1008 (FADATRDDGTQLAD) lie on the Exoplasmic loop side of the membrane. Residues 1009 to 1031 (YQSFAVTVATSLVIVVSVQIGLD) form a helical membrane-spanning segment. Residues 1032–1037 (TGYWTA) lie on the Cytoplasmic side of the membrane. The helical transmembrane segment at 1038 to 1058 (INHFFIWGSLAVYFAILFAMH) threads the bilayer. Over 1059 to 1078 (SNGLFDMFPNQFRFVGNAQN) the chain is Exoplasmic loop. A helical membrane pass occupies residues 1079 to 1103 (TLAQPTVWLTIVLTTVVCIMPVVAF). Residues 1104–1209 (RFLRLNLKPD…SGGADKPLKG (106 aa)) are Cytoplasmic-facing. Phosphoserine is present on S1175. The interval 1181–1209 (SSSWIESLRRKKSDSASSPSGGADKPLKG) is disordered. Low complexity predominate over residues 1195-1209 (SASSPSGGADKPLKG).

The protein belongs to the cation transport ATPase (P-type) (TC 3.A.3) family. Type IV subfamily. In terms of assembly, component of a P4-ATPase flippase complex which consists of a catalytic alpha subunit ATP8B2 and an accessory beta subunit TMEM30A or TMEM30B. Mg(2+) serves as cofactor. In terms of tissue distribution, isoform 3 is ubiquitous, with highest expression in aorta, cerebellum and uterus.

The protein localises to the cell membrane. It is found in the endoplasmic reticulum membrane. It catalyses the reaction ATP + H2O + phospholipidSide 1 = ADP + phosphate + phospholipidSide 2.. The catalysed reaction is a 1,2-diacyl-sn-glycero-3-phosphocholine(out) + ATP + H2O = a 1,2-diacyl-sn-glycero-3-phosphocholine(in) + ADP + phosphate + H(+). Its function is as follows. Catalytic component of P4-ATPase flippase complex, which catalyzes the hydrolysis of ATP coupled to the transport of phosphatidylcholine (PC) from the outer to the inner leaflet of the plasma membrane. May contribute to the maintenance of membrane lipid asymmetry. The sequence is that of Phospholipid-transporting ATPase ID from Homo sapiens (Human).